We begin with the raw amino-acid sequence, 607 residues long: NAD-dependent protein deacetylase sir-2.1 (607 aa).

Positions 1-68 (MSRDSGNDSE…SVSSESWQNN (68 aa)) are disordered. Residues 55–64 (ESTTSVSSES) show a composition bias toward low complexity. The Deacetylase sirtuin-type domain maps to 128-401 (KLTNYNSLAD…DSIMEQQGKT (274 aa)). NAD(+) contacts are provided by residues 153–172 (GAGVSVSCGIPDFRSKDGIY) and 237–240 (QNID). Residue H255 is the Proton acceptor of the active site. Residues C263, C266, C287, and C290 each contribute to the Zn(2+) site. NAD(+)-binding positions include 327–329 (GSS), 352–354 (NRE), and C369. Positions 426–453 (EKRNDDSSDEPTLKKPRMSVADDSMDSE) are disordered.

The protein belongs to the sirtuin family. Class I subfamily. As to quaternary structure, interacts with ftt-2 and par-5. Interacts with daf-16 following heat-shock, which causes daf-16 to accumulate in the nucleus. Interaction with daf-16 is promoted by ftt-2. Interacts with transcriptional coregulator hcf-1. Zn(2+) is required as a cofactor.

Its subcellular location is the nucleus. It localises to the cytoplasm. It carries out the reaction N(6)-acetyl-L-lysyl-[protein] + NAD(+) + H2O = 2''-O-acetyl-ADP-D-ribose + nicotinamide + L-lysyl-[protein]. Its function is as follows. NAD-dependent deacetylase. Involved in metabolism, apoptosis, response to oxidative stress, response to DNA damage, and determination of lifespan. Required for a reduction of the 'Lys-16' acetylation of histone H4 (H4K16ac) on dosage-compensated X chromosomes in hermaphrodites. Plays a role in germ cell and somatic cell apoptosis in response to DNA damage. Functions upstream of daf-16/Forkhead box protein O in the Insulin/IGF-1-like signaling (IIS) mediated pathway, promoting daf-16 mediated transcriptional activation and increased lifespan. May also regulate lifespan independently of daf-16 by modulating the transcription of genes involved in the stress response of the endoplasmic reticulum (ER). Functions upstream of transcriptional coregulator hcf-1, perhaps acting independently of the IIS mediated pathway, to modulate lifespan and oxidative stress response. Acts upstream of the nicotinic acid metabolism pathway, which may be linked to the regulation of longevity. Plays a role in ascaroside-mediated longevity and stress resistance. This chain is NAD-dependent protein deacetylase sir-2.1, found in Caenorhabditis elegans.